A 347-amino-acid polypeptide reads, in one-letter code: GMP reductase (347 aa).

NADP(+) is bound at residue 108–131 (ADFQKTKDIMALTDDLIFICIDIA). Positions 181 and 183 each coordinate K(+). Cysteine 186 functions as the Thioimidate intermediate in the catalytic mechanism. 216–239 (IIGDGGCSCAGDVSKAFGGGADFV) contacts NADP(+).

The protein belongs to the IMPDH/GMPR family. GuaC type 1 subfamily. Homotetramer.

The catalysed reaction is IMP + NH4(+) + NADP(+) = GMP + NADPH + 2 H(+). Functionally, catalyzes the irreversible NADPH-dependent deamination of GMP to IMP. It functions in the conversion of nucleobase, nucleoside and nucleotide derivatives of G to A nucleotides, and in maintaining the intracellular balance of A and G nucleotides. The chain is GMP reductase from Aliivibrio fischeri (strain ATCC 700601 / ES114) (Vibrio fischeri).